The primary structure comprises 212 residues: MTHSKRWLEEHAKDPYVKRAKKEGYPSRAAYKLLEIHQKYKLFKPSMNVIDLGAAPGGWSQVAKDLVGPKGVVIAIDLLPMQSMLDVIFIQGDFNEPEIFNQLEAIVAKKTLTGQVDLVISDMAPNISGIKNVDQSRSLHLVELAWDCAQKLLARGGTFLVKVFQGPGVDRFLINLRPYFNQVKFLKPSASRSRSSEIYILAGEFLGYNQRV.

S-adenosyl-L-methionine contacts are provided by Gly57, Trp59, Asp77, Asp93, and Asp122. Lys162 acts as the Proton acceptor in catalysis.

The protein belongs to the class I-like SAM-binding methyltransferase superfamily. RNA methyltransferase RlmE family.

It localises to the cytoplasm. It catalyses the reaction uridine(2552) in 23S rRNA + S-adenosyl-L-methionine = 2'-O-methyluridine(2552) in 23S rRNA + S-adenosyl-L-homocysteine + H(+). In terms of biological role, specifically methylates the uridine in position 2552 of 23S rRNA at the 2'-O position of the ribose in the fully assembled 50S ribosomal subunit. In Coxiella burnetii (strain RSA 331 / Henzerling II), this protein is Ribosomal RNA large subunit methyltransferase E.